Here is a 351-residue protein sequence, read N- to C-terminus: Ion-translocating oxidoreductase complex subunit D (351 aa).

The next 4 membrane-spanning stretches (helical) occupy residues 20 to 40 (IMLL…YFFG), 44 to 64 (LIQV…TLSL), 89 to 109 (LPPL…IIIA), and 123 to 143 (PAMI…TSWL). At Thr187 the chain carries FMN phosphoryl threonine. Transmembrane regions (helical) follow at residues 215–235 (LSGI…LFLL), 244–264 (IPVS…VIAP), 267–287 (FAPP…FFIA), 301–321 (LIFG…GGYP), and 322–342 (DGVA…DYYT).

Belongs to the NqrB/RnfD family. In terms of assembly, the complex is composed of six subunits: RnfA, RnfB, RnfC, RnfD, RnfE and RnfG. FMN is required as a cofactor.

It is found in the cell inner membrane. Its function is as follows. Part of a membrane-bound complex that couples electron transfer with translocation of ions across the membrane. This is Ion-translocating oxidoreductase complex subunit D from Pectobacterium carotovorum subsp. carotovorum (strain PC1).